A 154-amino-acid chain; its full sequence is CASP-like protein 5B2 (154 aa).

Over 1 to 10 (MKKLLGGPGT) the chain is Cytoplasmic. A helical transmembrane segment spans residues 11-31 (VCGLLLRIGQCASAAASIGVM). Residues 32–42 (VSAKEFSVHTA) are Extracellular-facing. A helical membrane pass occupies residues 43–63 (FCYLIASMGLQLLWSFGLACL). The Cytoplasmic segment spans residues 64-77 (DVYALRGKKDLQNP). The helical transmembrane segment at 78-98 (ILVSLFVVGDWVTAMLSLAAA) threads the bilayer. At 99 to 129 (CSSAGVVVLYEKDIKYCNTQSQYPCLRYEVA) the chain is on the extracellular side. A helical membrane pass occupies residues 130-150 (VALSFVTWIQIAVSSHVTFWI). Topologically, residues 151 to 154 (LASV) are cytoplasmic.

Belongs to the Casparian strip membrane proteins (CASP) family. As to quaternary structure, homodimer and heterodimers. As to expression, expressed in the stele of the root.

It is found in the cell membrane. The sequence is that of CASP-like protein 5B2 from Arabidopsis thaliana (Mouse-ear cress).